The sequence spans 320 residues: Cytochrome f (320 aa).

Positions 1 to 35 (MQTRKTFSWIKEQINRSISVSLMIYIITRPSISIA) are cleaved as a signal peptide. Residues Tyr-36, Cys-56, Cys-59, and His-60 each contribute to the heme site. The helical transmembrane segment at 286-306 (VQGLLFFLASVILAQIFLVLK) threads the bilayer.

The protein belongs to the cytochrome f family. The 4 large subunits of the cytochrome b6-f complex are cytochrome b6, subunit IV (17 kDa polypeptide, petD), cytochrome f and the Rieske protein, while the 4 small subunits are PetG, PetL, PetM and PetN. The complex functions as a dimer. Heme is required as a cofactor.

It localises to the plastid. Its subcellular location is the chloroplast thylakoid membrane. Component of the cytochrome b6-f complex, which mediates electron transfer between photosystem II (PSII) and photosystem I (PSI), cyclic electron flow around PSI, and state transitions. This Daucus carota (Wild carrot) protein is Cytochrome f.